A 34-amino-acid polypeptide reads, in one-letter code: Photosystem II reaction center protein Psb30 (34 aa).

Residues 6 to 26 form a helical membrane-spanning segment; that stretch reads VIGQLIATGAIMLAGPAVIVL.

Belongs to the Psb30/Ycf12 family. PSII is composed of 1 copy each of membrane proteins PsbA, PsbB, PsbC, PsbD, PsbE, PsbF, PsbH, PsbI, PsbJ, PsbK, PsbL, PsbM, PsbT, PsbX, PsbY, PsbZ, Psb30/Ycf12, peripheral proteins of the oxygen-evolving complex and a large number of cofactors. It forms dimeric complexes.

Its subcellular location is the plastid. It is found in the chloroplast thylakoid membrane. Its function is as follows. A core subunit of photosystem II (PSII), probably helps stabilize the reaction center. In Trieres chinensis (Marine centric diatom), this protein is Photosystem II reaction center protein Psb30.